A 235-amino-acid chain; its full sequence is Uridylate kinase (235 aa).

An ATP-binding site is contributed by 12–15 (KISG). Glycine 54 is a UMP binding site. Glycine 55 and arginine 59 together coordinate ATP. Residues aspartate 72 and 133–140 (TGNPFFST) contribute to the UMP site. ATP contacts are provided by tyrosine 166 and aspartate 169.

Belongs to the UMP kinase family. In terms of assembly, homohexamer.

It is found in the cytoplasm. The catalysed reaction is UMP + ATP = UDP + ADP. It participates in pyrimidine metabolism; CTP biosynthesis via de novo pathway; UDP from UMP (UMPK route): step 1/1. Its activity is regulated as follows. Inhibited by UTP. Functionally, catalyzes the reversible phosphorylation of UMP to UDP. The protein is Uridylate kinase of Acetivibrio thermocellus (strain ATCC 27405 / DSM 1237 / JCM 9322 / NBRC 103400 / NCIMB 10682 / NRRL B-4536 / VPI 7372) (Clostridium thermocellum).